The primary structure comprises 340 residues: Melanin-concentrating hormone receptor 2 (340 aa).

The Extracellular segment spans residues 1–39 (MNPFHASCWNTSAELLNKSWNKEFAYQTASVVDTVILPS). N-linked (GlcNAc...) asparagine glycans are attached at residues Asn10 and Asn17. The chain crosses the membrane as a helical span at residues 40–60 (MIGIICSTGLVGNILIVFTII). Topologically, residues 61–69 (RSRKKTVPD) are cytoplasmic. A helical membrane pass occupies residues 70–90 (IYICNLAVADLVHIVGMPFLI). Residues 91-104 (HQWARGGEWVFGGP) lie on the Extracellular side of the membrane. Residues 105–129 (LCTIITSLDTCNQFACSAIMTVMSV) traverse the membrane as a helical segment. Residues 130–154 (DRYFALVQPFRLTRWRTRYKTIRIN) are Cytoplasmic-facing. The chain crosses the membrane as a helical span at residues 155–175 (LGLWAASFILALPVWVYSKVI). Topologically, residues 176 to 200 (KFKDGVESCAFDLTSPDDVLWYTLY) are extracellular. The chain crosses the membrane as a helical span at residues 201 to 221 (LTITTFFFPLPLILVCYILIL). At 222–252 (CYTWEMYQQNKDARCCNPSVPKQRVMKLTKM) the chain is on the cytoplasmic side. The chain crosses the membrane as a helical span at residues 253–273 (VLVLVVVFILSAAPYHVIQLV). Topologically, residues 274 to 288 (NLQMEQPTLAFYVGY) are extracellular. Residues 289 to 309 (YLSICLSYASSSINPFLYILL) form a helical membrane-spanning segment. Over 310 to 340 (SGNFQKRLPQIQRRATEKEINNMGNTLKSHF) the chain is Cytoplasmic.

The protein belongs to the G-protein coupled receptor 1 family. As to expression, specifically expressed in the brain, with highest levels in cerebral cortex, hippocampus and amygdala. No expression detected in the cerebellum, thalamus or hypothalamus.

Its subcellular location is the cell membrane. Receptor for melanin-concentrating hormone, coupled to G proteins that activate phosphoinositide hydrolysis. This is Melanin-concentrating hormone receptor 2 (MCHR2) from Homo sapiens (Human).